Consider the following 211-residue polypeptide: Protein-L-isoaspartate O-methyltransferase (211 aa).

Residue Ser62 is part of the active site.

It belongs to the methyltransferase superfamily. L-isoaspartyl/D-aspartyl protein methyltransferase family.

It is found in the cytoplasm. It carries out the reaction [protein]-L-isoaspartate + S-adenosyl-L-methionine = [protein]-L-isoaspartate alpha-methyl ester + S-adenosyl-L-homocysteine. Catalyzes the methyl esterification of L-isoaspartyl residues in peptides and proteins that result from spontaneous decomposition of normal L-aspartyl and L-asparaginyl residues. It plays a role in the repair and/or degradation of damaged proteins. This chain is Protein-L-isoaspartate O-methyltransferase, found in Shewanella piezotolerans (strain WP3 / JCM 13877).